Consider the following 166-residue polypeptide: Regulatory protein RecX (166 aa).

It belongs to the RecX family.

The protein localises to the cytoplasm. Modulates RecA activity. The protein is Regulatory protein RecX of Shigella boydii serotype 4 (strain Sb227).